We begin with the raw amino-acid sequence, 219 residues long: Lipid transferase CIDEB (219 aa).

The CIDE-N domain occupies 33–110; sequence PRQRPFRVCD…VLELGQSWSP (78 aa).

The protein belongs to the CIDE family. Interacts with DFFA. Interacts with DFFB; inhibited by DFFB. Interacts with APOB. Interacts with PREB/SEC12; facilitating loading of SCAP-SREBP into COPII vesicles.

The protein resides in the lipid droplet. The protein localises to the endoplasmic reticulum membrane. Its subcellular location is the golgi apparatus. It is found in the cytoplasmic vesicle. It localises to the COPI-coated vesicle. In terms of biological role, lipid transferase specifically expressed in hepatocytes, which promotes unilocular lipid droplet formation by mediating lipid droplet fusion. Lipid droplet fusion promotes their enlargement, restricting lipolysis and favoring lipid storage. Localizes on the lipid droplet surface, at focal contact sites between lipid droplets, and mediates atypical lipid droplet fusion by promoting directional net neutral lipid transfer from the smaller to larger lipid droplets. The transfer direction may be driven by the internal pressure difference between the contacting lipid droplet pair. Promotes lipid exchange and lipid droplet fusion in both small and large lipid droplet-containing hepatocytes. In addition to its role in lipid droplet fusion, also involved in cytoplasmic vesicle biogenesis and transport. Required for very-low-density lipoprotein (VLDL) lipidation and maturation. Probably involved in the biogenesis of VLDL transport vesicles by forming a COPII vesicle coat and facilitating the formation of endoplasmic reticulum-derived large vesicles. Also involved in sterol-regulated export of the SCAP-SREBP complex, composed of SCAP, SREBF1/SREBP1 and SREBF2/SREBP2, by promoting loading of SCAP-SREBP into COPII vesicles. May also activate apoptosis. The chain is Lipid transferase CIDEB (CIDEB) from Bos taurus (Bovine).